Reading from the N-terminus, the 338-residue chain is Phenylalanine--tRNA ligase alpha subunit (338 aa).

Residue Glu-252 participates in Mg(2+) binding.

The protein belongs to the class-II aminoacyl-tRNA synthetase family. Phe-tRNA synthetase alpha subunit type 1 subfamily. In terms of assembly, tetramer of two alpha and two beta subunits. Mg(2+) serves as cofactor.

It is found in the cytoplasm. The enzyme catalyses tRNA(Phe) + L-phenylalanine + ATP = L-phenylalanyl-tRNA(Phe) + AMP + diphosphate + H(+). This is Phenylalanine--tRNA ligase alpha subunit from Pseudomonas syringae pv. syringae (strain B728a).